The following is a 588-amino-acid chain: Proteasome-associated ATPase (588 aa).

The segment covering 1 to 10 (MAAHDDDMNR) has biased composition (basic and acidic residues). The interval 1–23 (MAAHDDDMNRGIRPGRGSDDPSG) is disordered. Residues 47-94 (RILEERIVELQTNLAGVSAQNERLANTLREARDQIVALKEEVDRLAQP) are a coiled coil. Residue 276–281 (GCGKTL) coordinates ATP. The interval 587 to 588 (YL) is docks into pockets in the proteasome alpha-ring.

This sequence belongs to the AAA ATPase family. As to quaternary structure, homohexamer. Assembles into a hexameric ring structure that caps the 20S proteasome core. Strongly interacts with the prokaryotic ubiquitin-like protein Pup through a hydrophobic interface; the interacting region of ARC lies in its N-terminal coiled-coil domain. There is one Pup binding site per ARC hexamer ring. Upon ATP-binding, the C-terminus of ARC interacts with the alpha-rings of the proteasome core, possibly by binding to the intersubunit pockets.

It participates in protein degradation; proteasomal Pup-dependent pathway. ATPase which is responsible for recognizing, binding, unfolding and translocation of pupylated proteins into the bacterial 20S proteasome core particle. May be essential for opening the gate of the 20S proteasome via an interaction with its C-terminus, thereby allowing substrate entry and access to the site of proteolysis. Thus, the C-termini of the proteasomal ATPase may function like a 'key in a lock' to induce gate opening and therefore regulate proteolysis. The polypeptide is Proteasome-associated ATPase (Streptomyces scabiei (strain 87.22)).